A 49-amino-acid polypeptide reads, in one-letter code: Glutathione peroxidase (49 aa).

Belongs to the glutathione peroxidase family.

The enzyme catalyses 2 glutathione + H2O2 = glutathione disulfide + 2 H2O. Inhibited by Cu(2+), SDS and DTT. Activity is slightly increased by Fe(2+), Mn(2+), triton X-100 and EDTA. Its function is as follows. Glutathione peroxidase which may protect the cell from oxidative damage. The protein is Glutathione peroxidase of Lactiplantibacillus plantarum (Lactobacillus plantarum).